A 362-amino-acid chain; its full sequence is Spermidine/putrescine import ATP-binding protein PotA (362 aa).

Residues 4-235 (IKLDHITKQY…PVNDFVARFI (232 aa)) enclose the ABC transporter domain. 37 to 44 (GPSGSGKT) is an ATP binding site.

Belongs to the ABC transporter superfamily. Spermidine/putrescine importer (TC 3.A.1.11.1) family. The complex is composed of two ATP-binding proteins (PotA), two transmembrane proteins (PotB and PotC) and a solute-binding protein (PotD).

The protein resides in the cell membrane. The enzyme catalyses ATP + H2O + polyamine-[polyamine-binding protein]Side 1 = ADP + phosphate + polyamineSide 2 + [polyamine-binding protein]Side 1.. Part of the ABC transporter complex PotABCD involved in spermidine/putrescine import. Responsible for energy coupling to the transport system. The chain is Spermidine/putrescine import ATP-binding protein PotA from Lactobacillus delbrueckii subsp. bulgaricus (strain ATCC 11842 / DSM 20081 / BCRC 10696 / JCM 1002 / NBRC 13953 / NCIMB 11778 / NCTC 12712 / WDCM 00102 / Lb 14).